We begin with the raw amino-acid sequence, 625 residues long: Tyrosine-protein kinase ITK/TSK (625 aa).

In terms of domain architecture, PH spans 4-117 (FILLEEQLIK…WVLTLKEETR (114 aa)). A Btk-type zinc finger spans residues 119–155 (NNSLVSKYHPNFWMDGRWRCCSQLEKPAVGCAPYDPS). Positions 127, 138, 139, and 149 each coordinate Zn(2+). The disordered stretch occupies residues 153–174 (DPSKNASKKPLPPTPEDNRRSF). Residues 177–237 (PEETLVIALY…PSSYLVEKSP (61 aa)) form the SH3 domain. Residue Y186 is modified to Phosphotyrosine; by autocatalysis. Residues 245–343 (WYNKSISRDK…GLVTRLRYPV (99 aa)) enclose the SH2 domain. Positions 368–620 (LTFVQEIGSG…SQLLSQLAEI (253 aa)) constitute a Protein kinase domain. Residues 374–382 (IGSGQFGLV) and K396 contribute to the ATP site. D487 acts as the Proton acceptor in catalysis. Y517 carries the phosphotyrosine; by LCK modification. S570 is subject to Phosphoserine.

The protein belongs to the protein kinase superfamily. Tyr protein kinase family. TEC subfamily. Homooligomerizes; this association negatively regulates kinase activity. Interacts with PPIA/CYPA; this interaction regulates TCR signal strength via a proline-directed conformational switch in ITK. Interacts with THEMIS. Interacts with FASLG. Interacts with VAV1; this interaction is important for VAV1 localization and TCR-induced actin polarization. Interacts with TBX21. Zn(2+) serves as cofactor. Post-translationally, phosphorylated at Tyr-517 in the activation loop of the kinase domain by LCK. Subsequent autophosphorylation at Tyr-186 leads to the kinase activation. The autophosphorylated Tyr-186 lies within the substrate binding sequence of the SH3 domain. Ubiquitinated. Is detected in the thymus, lymph node and very faintly in the spleen, but is not detected in the liver, lung, kidney, heart, brain, intestine or testis. Expressed in T-lymphocytes and mast cells. It may also be expressed in natural killer cells.

Its subcellular location is the cytoplasm. The protein resides in the nucleus. The enzyme catalyses L-tyrosyl-[protein] + ATP = O-phospho-L-tyrosyl-[protein] + ADP + H(+). Functionally, tyrosine kinase that plays an essential role in regulation of the adaptive immune response. Regulates the development, function and differentiation of conventional T-cells and nonconventional NKT-cells. When antigen presenting cells (APC) activate T-cell receptor (TCR), a series of phosphorylation lead to the recruitment of ITK to the cell membrane, in the vicinity of the stimulated TCR receptor, where it is phosphorylated by LCK. Phosphorylation leads to ITK autophosphorylation and full activation. Once activated, phosphorylates PLCG1, leading to the activation of this lipase and subsequent cleavage of its substrates. In turn, the endoplasmic reticulum releases calcium in the cytoplasm and the nuclear activator of activated T-cells (NFAT) translocates into the nucleus to perform its transcriptional duty. Phosphorylates 2 essential adapter proteins: the linker for activation of T-cells/LAT protein and LCP2. Then, a large number of signaling molecules such as VAV1 are recruited and ultimately lead to lymphokine production, T-cell proliferation and differentiation. Required for TCR-mediated calcium response in gamma-delta T-cells, may also be involved in the modulation of the transcriptomic signature in the Vgamma2-positive subset of immature gamma-delta T-cells. Phosphorylates TBX21 at 'Tyr-525' and mediates its interaction with GATA3. This is Tyrosine-protein kinase ITK/TSK (Itk) from Mus musculus (Mouse).